A 268-amino-acid polypeptide reads, in one-letter code: Myeloid leukemia factor 1 (268 aa).

Phosphoserine is present on residues Ser-8, Ser-32, and Ser-34. Disordered regions lie at residues 44–66 (ISDG…SLTH) and 209–268 (GRHN…SNKK). The segment at 50–125 (RAHNRRGHND…IGDEPPKVFQ (76 aa)) is interaction with COPS3. Composition is skewed to basic and acidic residues over residues 56–65 (GHNDGEDSLT) and 226–237 (PGSRELKRREKP).

Belongs to the MLF family. As to quaternary structure, interacts with CENPU. Also interacts with NRBP1/MADM, YWHAZ/14-3-3-zeta and HNRPUL2/MANP. NRBP1 recruits a serine kinase which phosphorylates both itself and MLF1. Phosphorylated MLF1 then binds to YWHAZ and is retained in the cytoplasm. Retained in the nucleus by binding to HNRPUL2. Binds to COPS3/CSN3 which is required for suppression of COP1 and activation of p53. Post-translationally, phosphorylation is required for binding to YWHAZ. Most abundant in testis, ovary, skeletal muscle, heart, kidney and colon. Low expression in spleen, thymus and peripheral blood leukocytes.

It localises to the cytoplasm. It is found in the nucleus. The protein resides in the cell projection. Its subcellular location is the cilium. The protein localises to the cytoskeleton. It localises to the cilium basal body. In terms of biological role, involved in lineage commitment of primary hemopoietic progenitors by restricting erythroid formation and enhancing myeloid formation. Interferes with erythropoietin-induced erythroid terminal differentiation by preventing cells from exiting the cell cycle through suppression of CDKN1B/p27Kip1 levels. Suppresses COP1 activity via CSN3 which activates p53 and induces cell cycle arrest. Binds DNA and affects the expression of a number of genes so may function as a transcription factor in the nucleus. The protein is Myeloid leukemia factor 1 (MLF1) of Homo sapiens (Human).